A 100-amino-acid polypeptide reads, in one-letter code: Urease subunit gamma (100 aa).

This sequence belongs to the urease gamma subunit family. Heterotrimer of UreA (gamma), UreB (beta) and UreC (alpha) subunits. Three heterotrimers associate to form the active enzyme.

It is found in the cytoplasm. It catalyses the reaction urea + 2 H2O + H(+) = hydrogencarbonate + 2 NH4(+). It participates in nitrogen metabolism; urea degradation; CO(2) and NH(3) from urea (urease route): step 1/1. In Trichormus variabilis (strain ATCC 29413 / PCC 7937) (Anabaena variabilis), this protein is Urease subunit gamma.